The chain runs to 526 residues: Bifunctional purine biosynthesis protein PurH (526 aa).

The MGS-like domain occupies 1–145 (MIRTALLSVS…KNHQDVTVLI (145 aa)).

This sequence belongs to the PurH family.

It catalyses the reaction (6R)-10-formyltetrahydrofolate + 5-amino-1-(5-phospho-beta-D-ribosyl)imidazole-4-carboxamide = 5-formamido-1-(5-phospho-D-ribosyl)imidazole-4-carboxamide + (6S)-5,6,7,8-tetrahydrofolate. The enzyme catalyses IMP + H2O = 5-formamido-1-(5-phospho-D-ribosyl)imidazole-4-carboxamide. It functions in the pathway purine metabolism; IMP biosynthesis via de novo pathway; 5-formamido-1-(5-phospho-D-ribosyl)imidazole-4-carboxamide from 5-amino-1-(5-phospho-D-ribosyl)imidazole-4-carboxamide (10-formyl THF route): step 1/1. Its pathway is purine metabolism; IMP biosynthesis via de novo pathway; IMP from 5-formamido-1-(5-phospho-D-ribosyl)imidazole-4-carboxamide: step 1/1. The chain is Bifunctional purine biosynthesis protein PurH from Polynucleobacter necessarius subsp. necessarius (strain STIR1).